We begin with the raw amino-acid sequence, 41 residues long: Hemoglobin subunit beta (41 aa).

Positions 1–41 (LGNVLVCVLAHHFGKEFTPQVQAAYQKVVAGVANALAHKYH) constitute a Globin domain. An N6-acetyllysine modification is found at Lys-39.

The protein belongs to the globin family. In terms of assembly, heterotetramer of two alpha chains and two beta chains. In terms of tissue distribution, red blood cells.

In terms of biological role, involved in oxygen transport from the lung to the various peripheral tissues. The sequence is that of Hemoglobin subunit beta (HBB) from Colobus guereza (Mantled guereza).